The sequence spans 218 residues: Small ribosomal subunit protein uS3c (218 aa).

Residues 47 to 118 form the KH type-2 domain; the sequence is VQKNMKTSSG…KLNIAITRIE (72 aa).

This sequence belongs to the universal ribosomal protein uS3 family. Part of the 30S ribosomal subunit.

It localises to the plastid. The protein localises to the chloroplast. The protein is Small ribosomal subunit protein uS3c (rps3) of Helianthus annuus (Common sunflower).